Here is a 209-residue protein sequence, read N- to C-terminus: Uracil phosphoribosyltransferase (209 aa).

Residues arginine 79, arginine 104, and 131–139 (DPMLATGGS) contribute to the 5-phospho-alpha-D-ribose 1-diphosphate site. Residues isoleucine 194 and 199-201 (GDA) each bind uracil. Position 200 (aspartate 200) interacts with 5-phospho-alpha-D-ribose 1-diphosphate.

This sequence belongs to the UPRTase family. The cofactor is Mg(2+).

The enzyme catalyses UMP + diphosphate = 5-phospho-alpha-D-ribose 1-diphosphate + uracil. The protein operates within pyrimidine metabolism; UMP biosynthesis via salvage pathway; UMP from uracil: step 1/1. Allosterically activated by GTP. Catalyzes the conversion of uracil and 5-phospho-alpha-D-ribose 1-diphosphate (PRPP) to UMP and diphosphate. The sequence is that of Uracil phosphoribosyltransferase from Bacillus velezensis (strain DSM 23117 / BGSC 10A6 / LMG 26770 / FZB42) (Bacillus amyloliquefaciens subsp. plantarum).